The primary structure comprises 93 residues: Protein translocase subunit SecE (93 aa).

Residues 1–33 (MTDALGSIDMPDAEDETREKKARKGGKRGKKGP) form a disordered region. The span at 20–33 (KKARKGGKRGKKGP) shows a compositional bias: basic residues. A helical membrane pass occupies residues 64–84 (TVVIVFVVIMIGLVTVIDFGF).

Belongs to the SecE/SEC61-gamma family. Component of the Sec protein translocase complex. Heterotrimer consisting of SecY, SecE and SecG subunits. The heterotrimers can form oligomers, although 1 heterotrimer is thought to be able to translocate proteins. Interacts with the ribosome. Interacts with SecDF, and other proteins may be involved. Interacts with SecA.

The protein resides in the cell membrane. In terms of biological role, essential subunit of the Sec protein translocation channel SecYEG. Clamps together the 2 halves of SecY. May contact the channel plug during translocation. The protein is Protein translocase subunit SecE of Streptomyces virginiae (Streptomyces cinnamonensis).